A 63-amino-acid chain; its full sequence is Prokaryotic ubiquitin-like protein Pup (63 aa).

Positions 1–28 are disordered; that stretch reads MPQEFEQIRSADQPLDSEESAPVAGART. The interval 19–57 is ARC ATPase binding; sequence ESAPVAGARTDDTVDALDAVLDDIESVLETNAEEYVGSF. Glutamate 63 participates in a covalent cross-link: Isoglutamyl lysine isopeptide (Glu-Lys) (interchain with K-? in acceptor proteins).

The protein belongs to the prokaryotic ubiquitin-like protein family. Strongly interacts with the proteasome-associated ATPase ARC through a hydrophobic interface; the interacting region of Pup lies in its C-terminal half. There is one Pup binding site per ARC hexamer ring.

The protein operates within protein degradation; proteasomal Pup-dependent pathway. In terms of biological role, protein modifier that is covalently attached to lysine residues of substrate proteins, thereby targeting them for proteasomal degradation. The tagging system is termed pupylation. In Bifidobacterium dentium (strain ATCC 27534 / DSM 20436 / JCM 1195 / Bd1), this protein is Prokaryotic ubiquitin-like protein Pup.